The chain runs to 1006 residues: DNA polymerase (1006 aa).

It belongs to the DNA polymerase type-B family. Interacts with OPG148. Component of the Uracil-DNA glycosylase(UDG)-OPG148-polymerase complex; OPG148 and OPG116/UDG form a heterodimeric processivity factor that associates with OPG071 to form the processive polymerase holoenzyme.

It carries out the reaction DNA(n) + a 2'-deoxyribonucleoside 5'-triphosphate = DNA(n+1) + diphosphate. In terms of biological role, catalyzes DNA synthesis. Acquires processivity by associating with a heterodimeric processivity factor comprised of the viral OPG148 and OPG116 proteins, thereby forming the DNA polymerase holoenzyme. Displays 3'- to 5' exonuclease activity. Might participate in viral DNA recombination. Does not perform OPG116/D4synthesis across an abasic site. The sequence is that of DNA polymerase (OPG071) from Monkeypox virus.